The following is an 833-amino-acid chain: MNLLYRKTKLEWRQHKEEEAKRSSSKEAAPTGPVGPGAVPGPGVRVRDIASLRRSLRMGFMTMPASQEHTPHPCRSTMAPRSLSCHSVGSMDSVGGGPGGGLTEDSSTRRPPAKPRRHPSTKLSMAGPGAETPPSKKAGSQKPAPECRESSRKVPPQKPRRSPNTQLSVSFDESCAPAPSPRGANLPLQRLSRASRITGDLDAGAQEEEPVYIEMVGDVFRGGGRSGGGLAGPPLGSGGPTPPAAADSDSEDSEAIYEEMKYPLPEEAGDGRANGPPPLTAPSPPQQTHILQPHPHPHRRPASALPSRRDGTPTKTTPCEIPPPFPNLLQHRPPLLAFPQAKSASRAPGDGVSRLPVLCHSKEPAGSTPAPQVPARERETPPLPPPPPAANLLLLGPSGRARSHSTPLPPQGSGQTRGERELPNSHSMICPKAAGVPAAHPAPAALLPGPPKDKAVSYTMVYSAVKVTTHSVLPAGPPLGVGEPKTEEISVLHGMLCASSRPPVPGKSSPHSGAMGSAAGVLHHRSCLASPHSLPDPTGGSLTPLWTYPATAAGLKRPPAYDSLKAGGVLNKGCGMGAPSPMVKIQLQEQGTDGGAFASISCAHVIASAGTPEEEEEMGAAFGAGWALQRKVLYGGRKAKEVDTEEDGARAWNGSTEGPGKVEHEDRGPVPSGIPVRSQGAEGLLARIHHDRGGSRTALPVPCQTFPACHRNGDFTGGYRLGRSASTSGVRQAALHTPRPCSQPRDALSQTHPVLPLPLPPQPARERDGKLLEVIERKRCVCKEIKARHRPDRGLCKQESMPILPSWRRVPEPRKSGTPPCRRQHTVLWDTAI.

5 disordered regions span residues 1 to 45, 64 to 191, 219 to 423, 645 to 674, and 736 to 765; these read MNLL…PGVR, PASQ…LQRL, VFRG…RELP, EEDGARAWNGSTEGPGKVEHEDRGPVPSGI, and HTPRPCSQPRDALSQTHPVLPLPLPPQPAR. A compositionally biased stretch (basic and acidic residues) spans 8–25; that stretch reads TKLEWRQHKEEEAKRSSS. The tract at residues 76–181 is involved in CYFIP1- and NCKAP1-binding; sequence STMAPRSLSC…DESCAPAPSP (106 aa). Over residues 111–120 the composition is skewed to basic residues; that stretch reads PPAKPRRHPS. Residues 162 to 171 show a composition bias toward polar residues; it reads SPNTQLSVSF. Gly residues predominate over residues 220–239; the sequence is FRGGGRSGGGLAGPPLGSGG. Residues 248 to 257 show a composition bias toward acidic residues; that stretch reads SDSEDSEAIY. Pro residues predominate over residues 275-285; the sequence is GPPPLTAPSPP.

The protein belongs to the NYAP family. In terms of assembly, interacts with ACOT9, ARHGAP26 and PIK3R2. Interacts with components of the WAVE1 complex, CYFIP1 and NCKAP1; this interaction mediates PI3K-WAVE1 association and actin cytoskeleton remodeling. Phosphorylated on tyrosine residues by FYN upon stimulation with CNTN5. Phosphorylation begins at 14 dpc, reaches a peak during perinatal days in brain, then gradually decreases. Expressed predominantly in brain where it is present in the neurons, but not in astrocytes or oligodendrites.

Its function is as follows. Activates PI3K and concomitantly recruits the WAVE1 complex to the close vicinity of PI3K and regulates neuronal morphogenesis. This Mus musculus (Mouse) protein is Neuronal tyrosine-phosphorylated phosphoinositide-3-kinase adapter 1 (Nyap1).